The primary structure comprises 307 residues: Olfactory receptor 13G1 (307 aa).

At 1 to 22 (MNHSVVTEFIILGLTKKPELQG) the chain is on the extracellular side. An N-linked (GlcNAc...) asparagine glycan is attached at N2. A helical membrane pass occupies residues 23-43 (IIFLFFLIVYLVAFLGNMLII). Residues 44-51 (IAKIYNNT) are Cytoplasmic-facing. The chain crosses the membrane as a helical span at residues 52-72 (LHTPMYVFLLTLAVVDIICTT). Residues 73-96 (SIIPKMLGTMLTSENTISYAGCMS) lie on the Extracellular side of the membrane. Residues C94 and C186 are joined by a disulfide bond. The chain crosses the membrane as a helical span at residues 97-117 (QLFLFTWSLGAEMVLFTTMAY). Residues 118–136 (DRYVAICFPLHYSTIMNHH) are Cytoplasmic-facing. Residues 137-157 (MCVALLSMVMAIAVTNSWVHT) traverse the membrane as a helical segment. The Extracellular portion of the chain corresponds to 158–194 (ALIMRLTFCGPNTIDHFFCEIPPLLALSCSPVRINEV). A helical transmembrane segment spans residues 195-214 (MVYVADITLAIGDFILTCIS). Residues 215-234 (YGFIIVAILRIRTVEGKRKA) lie on the Cytoplasmic side of the membrane. The helical transmembrane segment at 235–255 (FSTCSSHLTVVTLYYSPVIYT) threads the bilayer. Residues 256–268 (YIRPASSYTFERD) are Extracellular-facing. Residues 269 to 289 (KVVAALYTLVTPTLNPMVYSF) traverse the membrane as a helical segment. Topologically, residues 290–307 (QNREMQAGIRKVFAFLKH) are cytoplasmic.

This sequence belongs to the G-protein coupled receptor 1 family.

It localises to the cell membrane. In terms of biological role, odorant receptor. This Homo sapiens (Human) protein is Olfactory receptor 13G1 (OR13G1).